A 193-amino-acid chain; its full sequence is 3-isopropylmalate dehydratase small subunit (193 aa).

The protein belongs to the LeuD family. LeuD type 1 subfamily. In terms of assembly, heterodimer of LeuC and LeuD.

It catalyses the reaction (2R,3S)-3-isopropylmalate = (2S)-2-isopropylmalate. It functions in the pathway amino-acid biosynthesis; L-leucine biosynthesis; L-leucine from 3-methyl-2-oxobutanoate: step 2/4. Functionally, catalyzes the isomerization between 2-isopropylmalate and 3-isopropylmalate, via the formation of 2-isopropylmaleate. This is 3-isopropylmalate dehydratase small subunit from Bacillus cereus (strain 03BB102).